A 75-amino-acid chain; its full sequence is MKPKKIISNKAQISLELALLLGALVVAASIVGFYYLKSVTRGTSTAESISKNITLAAKNKALDNIYKVKRALNGQ.

A propeptide spanning residues 1-11 (MKPKKIISNKA) is cleaved from the precursor. The QXSXEXXXL motif lies at 12–20 (QISLELALL).

The N-terminus is cleaved by the prepilin peptidase EppA, which recognizes the class III signal sequence.

Its subcellular location is the secreted. The protein localises to the cell surface. It is found in the fimbrium. The chain is Probable pilin MJ1469 from Methanocaldococcus jannaschii (strain ATCC 43067 / DSM 2661 / JAL-1 / JCM 10045 / NBRC 100440) (Methanococcus jannaschii).